Reading from the N-terminus, the 545-residue chain is Probable protein kinase UbiB (545 aa).

Positions 124-502 (DFDETPLASA…RRSQGLARFY (379 aa)) constitute a Protein kinase domain. ATP contacts are provided by residues 130 to 138 (LASASIAQV) and K153. The active-site Proton acceptor is the D288. Helical transmembrane passes span 498-517 (LARFYFGIGATLVVCSAILF) and 521-540 (VETIPVASAAMGVTFWLLGW).

The protein belongs to the ABC1 family. UbiB subfamily.

It is found in the cell inner membrane. Its pathway is cofactor biosynthesis; ubiquinone biosynthesis [regulation]. Its function is as follows. Is probably a protein kinase regulator of UbiI activity which is involved in aerobic coenzyme Q (ubiquinone) biosynthesis. The protein is Probable protein kinase UbiB of Photobacterium profundum (strain SS9).